Consider the following 404-residue polypeptide: Glycosylated lysosomal membrane protein (404 aa).

The first 35 residues, 1–35, serve as a signal peptide directing secretion; that stretch reads MRGSVERGWGWGHCASSPLLLWTLLLFAAPFGLLG. Topologically, residues 36–371 are lumenal; it reads EKTRQLSLEV…GRLVPTSPGH (336 aa). N-linked (GlcNAc...) asparagine glycosylation is found at asparagine 65, asparagine 134, asparagine 159, asparagine 186, and asparagine 229. Residues 372–392 traverse the membrane as a helical segment; that stretch reads HGSALGAPGLMLLGGGLVLLL. Topologically, residues 393 to 404 are cytoplasmic; that stretch reads HHRKYSEYQSIN. The Lysosomal targeting motif motif lies at 400–404; sequence YQSIN.

The protein belongs to the GLMP family. In terms of assembly, interacts (via lumenal domain) with lysosomal protein MFSD1; the interaction starts while both proteins are still in the endoplasmic reticulum and is required for stabilization of MFSD1 in lysosomes but has no direct effect on its targeting to lysosomes or transporter activity. In terms of processing, highly N-glycosylated. N-glycosylation is essential for GLMP stability and for MFSD1 lysosomal localization.

It localises to the lysosome membrane. Required to protect lysosomal transporter MFSD1 from lysosomal proteolysis and for MFSD1 lysosomal localization. The protein is Glycosylated lysosomal membrane protein of Pongo abelii (Sumatran orangutan).